The sequence spans 203 residues: Meiotically up-regulated protein PB17E12.09 (203 aa).

The stretch at 92–177 forms a coiled coil; it reads CNRKIEGYIK…KEMQLYMTKI (86 aa).

It is found in the cytoplasm. In terms of biological role, has a role in meiosis and sporulation. This Schizosaccharomyces pombe (strain 972 / ATCC 24843) (Fission yeast) protein is Meiotically up-regulated protein PB17E12.09.